We begin with the raw amino-acid sequence, 132 residues long: Large ribosomal subunit protein uL14 (132 aa).

It belongs to the universal ribosomal protein uL14 family. The L3/L14/L24e cluster may contact the 16S rRNA in 2 intersubunit bridges. Part of the 50S ribosomal subunit. Forms a cluster with proteins L3 and L24e.

Functionally, forms part of two intersubunit bridges in the 70S ribosome. Binds to 23S rRNA. This chain is Large ribosomal subunit protein uL14, found in Haloarcula marismortui (strain ATCC 43049 / DSM 3752 / JCM 8966 / VKM B-1809) (Halobacterium marismortui).